Here is a 172-residue protein sequence, read N- to C-terminus: Putative phosphoesterase BCAH820_1309 (172 aa).

The active-site Proton donor is the histidine 34. 2 consecutive short sequence motifs (HXTX) follow at residues 34–37 and 115–118; these read HITL and HLTI. The Proton acceptor role is filled by histidine 115.

This sequence belongs to the 2H phosphoesterase superfamily. YjcG family.

In Bacillus cereus (strain AH820), this protein is Putative phosphoesterase BCAH820_1309.